A 491-amino-acid chain; its full sequence is (S)-canadine synthase (491 aa).

A helical transmembrane segment spans residues Leu6–Phe26. Cys434 contacts heme.

This sequence belongs to the cytochrome P450 family. The cofactor is heme. In terms of tissue distribution, expressed at low levels in roots.

The protein resides in the endoplasmic reticulum membrane. It is found in the microsome membrane. The enzyme catalyses (S)-tetrahydrocolumbamine + reduced [NADPH--hemoprotein reductase] + O2 = (S)-canadine + oxidized [NADPH--hemoprotein reductase] + 2 H2O + H(+). In terms of biological role, involved in the last but one step of the biosynthesis of berberine, an antimicrobial benzylisoquinoline alkaloid. Converts (S)-tetrahydrocolumbamine (THC) to (S)-tetrahydroberberine (THB) also called (S)-canadine. The sequence is that of (S)-canadine synthase (CYP719A1) from Coptis japonica (Japanese goldthread).